Consider the following 191-residue polypeptide: Octanoyltransferase (191 aa).

Residues 10-185 (ENSHDEIWLV…NILALLNNPP (176 aa)) enclose the BPL/LPL catalytic domain. Substrate contacts are provided by residues 49 to 56 (RGGQVTYH), 116 to 118 (SLG), and 129 to 131 (GLA). C147 serves as the catalytic Acyl-thioester intermediate.

This sequence belongs to the LipB family.

Its subcellular location is the cytoplasm. The enzyme catalyses octanoyl-[ACP] + L-lysyl-[protein] = N(6)-octanoyl-L-lysyl-[protein] + holo-[ACP] + H(+). It functions in the pathway protein modification; protein lipoylation via endogenous pathway; protein N(6)-(lipoyl)lysine from octanoyl-[acyl-carrier-protein]: step 1/2. Its function is as follows. Catalyzes the transfer of endogenously produced octanoic acid from octanoyl-acyl-carrier-protein onto the lipoyl domains of lipoate-dependent enzymes. Lipoyl-ACP can also act as a substrate although octanoyl-ACP is likely to be the physiological substrate. In Salmonella choleraesuis (strain SC-B67), this protein is Octanoyltransferase.